The sequence spans 233 residues: Orotidine 5'-phosphate decarboxylase (233 aa).

Substrate-binding positions include Asp11, Lys34, 61–70 (DLKLHDIPNT), Thr117, Arg179, Gln188, Gly208, and Arg209. Lys63 functions as the Proton donor in the catalytic mechanism.

Belongs to the OMP decarboxylase family. Type 1 subfamily. In terms of assembly, homodimer.

It catalyses the reaction orotidine 5'-phosphate + H(+) = UMP + CO2. It participates in pyrimidine metabolism; UMP biosynthesis via de novo pathway; UMP from orotate: step 2/2. In terms of biological role, catalyzes the decarboxylation of orotidine 5'-monophosphate (OMP) to uridine 5'-monophosphate (UMP). This chain is Orotidine 5'-phosphate decarboxylase, found in Streptococcus pneumoniae (strain CGSP14).